A 263-amino-acid polypeptide reads, in one-letter code: MSQADLLDQDPVFQLKGSMLAVTILELAHNDLARLERQLADKVAQAPNFFRDTPLVMALDKLPEGEGRLDLPALLEVCRRHGLRTLAIRAGREEDIAAAQALDLPVLPPSGARERPLDIKDSAPRKPAEEPSPSAGEARPEPAKAEEKPADPVSRPTKVVKTPVRGGMQIYAAGGDLIVLAAVSPGAELLADGNIHVYGPMRGRALAGVKGDATARIFCQQLAAELVSIAGNYKVAEDLRRSPQWGKAVHVSLSGDVLNITRL.

The interval 107 to 159 (LPPSGARERPLDIKDSAPRKPAEEPSPSAGEARPEPAKAEEKPADPVSRPTKV) is disordered. Basic and acidic residues-rich tracts occupy residues 112 to 129 (ARERPLDIKDSAPRKPAE) and 138 to 150 (ARPEPAKAEEKPA).

This sequence belongs to the MinC family. In terms of assembly, interacts with MinD and FtsZ.

Functionally, cell division inhibitor that blocks the formation of polar Z ring septums. Rapidly oscillates between the poles of the cell to destabilize FtsZ filaments that have formed before they mature into polar Z rings. Prevents FtsZ polymerization. The protein is Probable septum site-determining protein MinC of Pseudomonas aeruginosa (strain UCBPP-PA14).